Reading from the N-terminus, the 460-residue chain is Diguanylate cyclase DosC (460 aa).

Heme is bound at residue H98. One can recognise a GGDEF domain in the interval 325-458 (TPLSVLIIDV…GRNRVELWKA (134 aa)). D333 is a binding site for Mg(2+). The substrate site is built by N341 and D350. D376 contributes to the Mg(2+) binding site. D376 functions as the Proton acceptor in the catalytic mechanism.

Heme serves as cofactor. Mg(2+) is required as a cofactor.

It carries out the reaction 2 GTP = 3',3'-c-di-GMP + 2 diphosphate. It functions in the pathway purine metabolism; 3',5'-cyclic di-GMP biosynthesis. Globin-coupled heme-based oxygen sensor protein displaying diguanylate cyclase (DGC) activity in response to oxygen availability. Thus, catalyzes the synthesis of cyclic diguanylate (c-di-GMP) via the condensation of 2 GTP molecules. Cyclic-di-GMP is a second messenger which controls cell surface-associated traits in bacteria. The sequence is that of Diguanylate cyclase DosC (dosC) from Escherichia coli O157:H7.